The primary structure comprises 224 residues: MARYLLLASTLLLAACSSTPKKPIADDPFYAPVYPEAPPTKIAATGSIYQDSQAASLYSDIRAHKVGDIITIVLKEATQAKKSAGNQIKKGSDMTLDPIYAGGSNVSLGGIPLDLRYKDSMNTKRESDADQSNSLDGSISANIMQVLNNGNLVVRGEKWISINNGDEFIRVTGIVRSQDIKPDNTIDSTRMANARIQYSGTGTFAEAQKVGWLSQFFMSDWWPF.

The first 15 residues, 1–15, serve as a signal peptide directing secretion; it reads MARYLLLASTLLLAA. Cysteine 16 is lipidated: N-palmitoyl cysteine. Cysteine 16 is lipidated: S-diacylglycerol cysteine.

It belongs to the FlgH family. In terms of assembly, the basal body constitutes a major portion of the flagellar organelle and consists of four rings (L,P,S, and M) mounted on a central rod.

Its subcellular location is the cell outer membrane. The protein resides in the bacterial flagellum basal body. In terms of biological role, assembles around the rod to form the L-ring and probably protects the motor/basal body from shearing forces during rotation. The chain is Flagellar L-ring protein from Shewanella sp. (strain ANA-3).